The chain runs to 1010 residues: Outer kinetochore KNL1 complex subunit knl-1 (1010 aa).

A run of 9 repeats spans residues 85 to 88 (MDIS), 109 to 112 (MDMS), 228 to 231 (MDTS), 255 to 258 (MDIT), 278 to 281 (MDIS), 323 to 326 (MDIT), 346 to 349 (MDIS), 402 to 405 (MDIT), and 428 to 431 (MDIS). The 9 X 4 AA repeats of M-[D/E]-[I/L/M]-[S/T] stretch occupies residues 85–431 (MDISESPACT…LQKEDLMDIS (347 aa)). 2 coiled-coil regions span residues 820-915 (RIVE…GLDK) and 956-988 (KALR…KFAQ).

As to quaternary structure, component of the KNL1 complex composed of knl-1 and kbp-5. Part of the ten-subunit outer kinetochore KMN network that includes the KNL1, MIS12 and NDC80 complexes. Interacts with the protein phosphatase 1 (PP1) catalytic subunit gsp-1; the interaction is direct. Interacts with the protein phosphatase 1 (PP1) catalytic subunit gsp-2; the interaction is direct. Interacts with the MIS12 complex subunits kbp-1, kbp-2 and mis-12. Interacts with the NDC80 complex components ndc-80 and him-10. Interacts with knl-3. Interacts with kbp-3. Interacts with kbp-4. Interacts with kbp-5.

It localises to the cytoplasm. Its subcellular location is the cell cortex. It is found in the chromosome. The protein resides in the centromere. The protein localises to the kinetochore. In terms of biological role, acts as a component of the outer kinetochore KNL1 complex that serves as a docking point for spindle assembly checkpoint components and mediates microtubule-kinetochore interactions. Kinetochores, consisting of a centromere-associated inner segment and a microtubule-contacting outer segment, play a crucial role in chromosome segregation by mediating the physical connection between centromeric DNA and spindle microtubules. The outer kinetochore is made up of the ten-subunit KMN network, comprising the MIS12, NDC80 and KNL1 complexes, and auxiliary microtubule-associated components; together they connect the outer kinetochore with the inner kinetochore, bind microtubules, and mediate interactions with mitotic checkpoint proteins that delay anaphase until chromosomes are bioriented on the spindle. Binds the protein phosphatase 1 catalytic subunits gsp-1 and gsp-2, which has a role in delaying formation of load-bearing kinetochore-microtubule attachments. Required for the recruitment of spindle-assembly checkpoint components bub-1 and mdf-1/2 to unattached kinetochores. Binds microtubules which plays a role in silencing of the spindle assembly checkpoint, but not the formation of load-bearing microtubule-kinetochore attachments. Has a role in the correct localization of the spindly-like protein spdl-1 and the RZZ complex that is composed of rod-1, czw-1 and zwl-1 to kinetochores. The sequence is that of Outer kinetochore KNL1 complex subunit knl-1 (knl-1) from Caenorhabditis elegans.